Reading from the N-terminus, the 1210-residue chain is Histone-lysine N-methyltransferase EHMT2 (1210 aa).

Low complexity predominate over residues 1 to 23; it reads MAAAAGAAAAAAAEGEAPAEMGA. Disordered stretches follow at residues 1 to 262 and 280 to 386; these read MAAA…LEEW and DERV…EYME. Alanine 2 is modified (N-acetylalanine). Over residues 26–38 the composition is skewed to basic and acidic residues; the sequence is LEKETRGATERVH. Serine 40 is modified (phosphoserine). Position 44 is a phosphothreonine (threonine 44). At serine 47 the chain carries Phosphoserine. Residues 105-128 are compositionally biased toward low complexity; that stretch reads GRILLGHATKSFPSSPSKGGSCPS. Serine 140 carries the phosphoserine modification. Over residues 155–165 the composition is skewed to low complexity; it reads PGAQGAAAAGS. Residue serine 173 is modified to Phosphoserine. An N6,N6,N6-trimethyllysine; by EHMT2; alternate modification is found at lysine 185. The residue at position 185 (lysine 185) is an N6,N6-dimethyllysine; by EHMT2; alternate. Over residues 198–216 the composition is skewed to basic and acidic residues; sequence PEKRPPEIQHFRMSDDVHS. Residues lysine 219 and lysine 229 each participate in a glycyl lysine isopeptide (Lys-Gly) (interchain with G-Cter in SUMO2) cross-link. Phosphoserine occurs at positions 232, 242, and 246. The span at 280–291 shows a compositional bias: basic and acidic residues; sequence DERVDSDSKSEV. The segment covering 298-327 has biased composition (acidic residues); the sequence is LSEEEEEEEEEEEEEEEEEEEEEEEEDEES. Residues 338-347 show a composition bias toward basic residues; the sequence is GRRKAKKKWR. A phosphoserine mark is found at serine 350, serine 412, and serine 413. Positions 548–608 are disordered; it reads IPRGDGVTPP…LADTIDSSGP (61 aa). A Phosphothreonine modification is found at threonine 555. Serine 569 is subject to Phosphoserine. Lysine 634 is covalently cross-linked (Glycyl lysine isopeptide (Lys-Gly) (interchain with G-Cter in SUMO2)). 7 ANK repeats span residues 649-678, 684-713, 717-746, 750-780, 784-813, 817-846, and 850-879; these read FHPR…DPNF, SKRT…NINA, QQRT…CVYS, DGST…DVNA, GGWT…DVTL, EENI…DLHA, and HGDT…NPEL. A histone H3K9me binding region spans residues 817-819; the sequence is EEN. Residues 972–1035 enclose the Pre-SET domain; sequence QHCTCVDDCS…NCKNRVVQSG (64 aa). Cysteine 974, cysteine 976, cysteine 980, cysteine 985, cysteine 987, cysteine 1017, cysteine 1021, cysteine 1023, and cysteine 1027 together coordinate Zn(2+). In terms of domain architecture, SET spans 1038–1155; the sequence is VRLQLYRTAK…TGEELGFDYG (118 aa). S-adenosyl-L-methionine-binding positions include 1048 to 1050, tyrosine 1085, and 1112 to 1113; these read MGW and NH. The segment at 1074-1093 is interaction with histone H3; it reads DAEADVREDDSYLFDLDNKD. A Zn(2+)-binding site is contributed by cysteine 1115. The interaction with histone H3 stretch occupies residues 1154 to 1157; sequence YGDR. Positions 1164–1180 constitute a Post-SET domain; sequence KYFTCQCGSEKCKHSAE. Position 1168 (cysteine 1168) interacts with Zn(2+). Glutamine 1169 serves as a coordination point for S-adenosyl-L-methionine. Residues cysteine 1170 and cysteine 1175 each contribute to the Zn(2+) site. A Phosphoserine modification is found at serine 1204. Residue threonine 1210 is modified to Phosphothreonine.

Belongs to the class V-like SAM-binding methyltransferase superfamily. Histone-lysine methyltransferase family. Suvar3-9 subfamily. Heterodimer; heterodimerizes with EHMT1/GLP. Interacts with GFI1B and WIZ. Part of the E2F6.com-1 complex in G0 phase composed of E2F6, MGA, MAX, TFDP1, CBX3, BAT8, EHMT1, RING1, RNF2, MBLR, L3MBTL2 and YAF2. Part of a complex composed of TRIM28, HDAC1, HDAC2 and EHMT2. Interacts with UHRF1. Interacts with CDYL. Interacts with REST only in the presence of CDYL. Part of a complex containing at least CDYL, REST, WIZ, SETB1, EHMT1 and EHMT2. Interacts with PRDM9 and CDYL; interaction only takes place when PRDM9 is bound to hotspot DNA. Interacts with SMYD5. Post-translationally, methylated at Lys-185; automethylated. As to expression, expressed in all tissues examined, with high levels in fetal liver, thymus, lymph node, spleen and peripheral blood leukocytes and lower level in bone marrow.

The protein resides in the nucleus. It localises to the chromosome. It carries out the reaction N(6)-methyl-L-lysyl(9)-[histone H3] + S-adenosyl-L-methionine = N(6),N(6)-dimethyl-L-lysyl(9)-[histone H3] + S-adenosyl-L-homocysteine + H(+). The enzyme catalyses L-lysyl(9)-[histone H3] + S-adenosyl-L-methionine = N(6)-methyl-L-lysyl(9)-[histone H3] + S-adenosyl-L-homocysteine + H(+). Functionally, histone methyltransferase that specifically mono- and dimethylates 'Lys-9' of histone H3 (H3K9me1 and H3K9me2, respectively) in euchromatin. H3K9me represents a specific tag for epigenetic transcriptional repression by recruiting HP1 proteins to methylated histones. Also mediates monomethylation of 'Lys-56' of histone H3 (H3K56me1) in G1 phase, leading to promote interaction between histone H3 and PCNA and regulating DNA replication. Also weakly methylates 'Lys-27' of histone H3 (H3K27me). Also required for DNA methylation, the histone methyltransferase activity is not required for DNA methylation, suggesting that these 2 activities function independently. Probably targeted to histone H3 by different DNA-binding proteins like E2F6, MGA, MAX and/or DP1. May also methylate histone H1. In addition to the histone methyltransferase activity, also methylates non-histone proteins: mediates dimethylation of 'Lys-373' of p53/TP53. Also methylates CDYL, WIZ, ACIN1, DNMT1, HDAC1, ERCC6, KLF12 and itself. The protein is Histone-lysine N-methyltransferase EHMT2 (EHMT2) of Homo sapiens (Human).